The sequence spans 252 residues: Imidazole glycerol phosphate synthase subunit HisF (252 aa).

Active-site residues include Asp11 and Asp130.

This sequence belongs to the HisA/HisF family. As to quaternary structure, heterodimer of HisH and HisF.

Its subcellular location is the cytoplasm. The enzyme catalyses 5-[(5-phospho-1-deoxy-D-ribulos-1-ylimino)methylamino]-1-(5-phospho-beta-D-ribosyl)imidazole-4-carboxamide + L-glutamine = D-erythro-1-(imidazol-4-yl)glycerol 3-phosphate + 5-amino-1-(5-phospho-beta-D-ribosyl)imidazole-4-carboxamide + L-glutamate + H(+). The protein operates within amino-acid biosynthesis; L-histidine biosynthesis; L-histidine from 5-phospho-alpha-D-ribose 1-diphosphate: step 5/9. In terms of biological role, IGPS catalyzes the conversion of PRFAR and glutamine to IGP, AICAR and glutamate. The HisF subunit catalyzes the cyclization activity that produces IGP and AICAR from PRFAR using the ammonia provided by the HisH subunit. The sequence is that of Imidazole glycerol phosphate synthase subunit HisF from Bacillus anthracis (strain CDC 684 / NRRL 3495).